We begin with the raw amino-acid sequence, 311 residues long: HPr kinase/phosphorylase (311 aa).

Catalysis depends on residues H138 and K159. 153-160 (GDSGIGKS) is a binding site for ATP. Mg(2+) is bound at residue S160. Residue D177 is the Proton acceptor; for phosphorylation activity. Proton donor; for dephosphorylation activity of the active site. The tract at residues 201 to 210 (LEIRGVGIIN) is important for the catalytic mechanism of both phosphorylation and dephosphorylation. Mg(2+) is bound at residue E202. R243 is a catalytic residue. The interval 264–269 (PVKTGR) is important for the catalytic mechanism of dephosphorylation.

It belongs to the HPrK/P family. In terms of assembly, homohexamer. The cofactor is Mg(2+).

The catalysed reaction is [HPr protein]-L-serine + ATP = [HPr protein]-O-phospho-L-serine + ADP + H(+). It carries out the reaction [HPr protein]-O-phospho-L-serine + phosphate + H(+) = [HPr protein]-L-serine + diphosphate. In terms of biological role, catalyzes the ATP- as well as the pyrophosphate-dependent phosphorylation of a specific serine residue in HPr, a phosphocarrier protein of the phosphoenolpyruvate-dependent sugar phosphotransferase system (PTS). HprK/P also catalyzes the pyrophosphate-producing, inorganic phosphate-dependent dephosphorylation (phosphorolysis) of seryl-phosphorylated HPr (P-Ser-HPr). The two antagonistic activities of HprK/P are regulated by several intracellular metabolites, which change their concentration in response to the absence or presence of rapidly metabolisable carbon sources (glucose, fructose, etc.) in the growth medium. Therefore, by controlling the phosphorylation state of HPr, HPrK/P is a sensor enzyme that plays a major role in the regulation of carbon metabolism and sugar transport: it mediates carbon catabolite repression (CCR), and regulates PTS-catalyzed carbohydrate uptake and inducer exclusion. This chain is HPr kinase/phosphorylase (hprK), found in Streptococcus mutans serotype c (strain ATCC 700610 / UA159).